The chain runs to 533 residues: Bifunctional purine biosynthesis protein PurH (533 aa).

The MGS-like domain occupies 1-148 (MDTPRPIKRA…KNHKDVTIVV (148 aa)).

Belongs to the PurH family.

The enzyme catalyses (6R)-10-formyltetrahydrofolate + 5-amino-1-(5-phospho-beta-D-ribosyl)imidazole-4-carboxamide = 5-formamido-1-(5-phospho-D-ribosyl)imidazole-4-carboxamide + (6S)-5,6,7,8-tetrahydrofolate. The catalysed reaction is IMP + H2O = 5-formamido-1-(5-phospho-D-ribosyl)imidazole-4-carboxamide. The protein operates within purine metabolism; IMP biosynthesis via de novo pathway; 5-formamido-1-(5-phospho-D-ribosyl)imidazole-4-carboxamide from 5-amino-1-(5-phospho-D-ribosyl)imidazole-4-carboxamide (10-formyl THF route): step 1/1. Its pathway is purine metabolism; IMP biosynthesis via de novo pathway; IMP from 5-formamido-1-(5-phospho-D-ribosyl)imidazole-4-carboxamide: step 1/1. This Colwellia psychrerythraea (strain 34H / ATCC BAA-681) (Vibrio psychroerythus) protein is Bifunctional purine biosynthesis protein PurH.